A 404-amino-acid chain; its full sequence is Serine/threonine transporter SstT (404 aa).

Transmembrane regions (helical) follow at residues 10–30 (ILGGNLVLRIAVGLVLGICLA), 53–73 (AIAPILVFVLVMASIANKEVG), 81–101 (ILVMYVLGTFVAAVTAVILSY), 140–160 (AITNGNFIGILAWSIGLGIAL), 177–197 (AVSFVVKVVIAFAPIGVFGLV), 215–235 (LLAVLLGAMAIVAFILNPLLV), 287–307 (IAIPLGANINMAGAAITITVL), and 329–349 (IVASICACGASGVAGGSLLLI).

This sequence belongs to the dicarboxylate/amino acid:cation symporter (DAACS) (TC 2.A.23) family.

The protein resides in the cell inner membrane. The catalysed reaction is L-serine(in) + Na(+)(in) = L-serine(out) + Na(+)(out). It catalyses the reaction L-threonine(in) + Na(+)(in) = L-threonine(out) + Na(+)(out). Its function is as follows. Involved in the import of serine and threonine into the cell, with the concomitant import of sodium (symport system). The polypeptide is Serine/threonine transporter SstT (Glaesserella parasuis serovar 5 (strain SH0165) (Haemophilus parasuis)).